The following is a 130-amino-acid chain: Putative transposase for insertion sequence element IS6501 (130 aa).

The protein belongs to the transposase 11 family.

Functionally, involved in the transposition of the insertion sequence. In Brucella ovis (strain ATCC 25840 / 63/290 / NCTC 10512), this protein is Putative transposase for insertion sequence element IS6501.